The sequence spans 86 residues: Chymotrypsin inhibitor (86 aa).

The first 16 residues, 1–16 (MKTLCIFLVLVVAVAA), serve as a signal peptide directing secretion. Cystine bridges form between cysteine 26–cysteine 58, cysteine 38–cysteine 50, cysteine 42–cysteine 82, and cysteine 60–cysteine 76. One can recognise a TIL domain in the interval 26–82 (CPPNKEFGSYGDCPPSCLKNPPNFCTLKLNYGCKCKEGYVLTRYQDYESDCIKPEEC).

This sequence belongs to the serine protease inhibitor-like (TIL domain-containing) family. Only expressed in fat body.

It localises to the secreted. Its function is as follows. Serine protease inhibitor that inhibits chymotrypsin (IC(50)=34.13 nM, Ki=49.85 nM), microbial serine proteases (subtilisin A (IC(50)=21.31 nM, Ki=20.51 nM) and proteinase K (IC(50)=52.56 nM, Ki=65.42 nM)), as well as human neutrophil elastase (IC(50)=11.54 nM, Ki=8.74 nM), and porcine pancreatic elastase (IC(50)=19.07 nM, Ki=11.32 nM). The protein is Chymotrypsin inhibitor of Araneus ventricosus (Orbweaver spider).